A 139-amino-acid polypeptide reads, in one-letter code: MPTINQLIRKGRKAKVKKSDSPALNKGYNSFKKVQTDLSSPQKRGVCTRVGTMTPKKPNSALRKYARVRLSNQIEVTAYIPGIGHNLQEHSVVLIRGGRVKDLPGVRYHIVRGALDTAGVQDRMQGRSKYGTKRPKDKK.

Residues 1–55 (MPTINQLIRKGRKAKVKKSDSPALNKGYNSFKKVQTDLSSPQKRGVCTRVGTMTP) form a disordered region. Over residues 32–42 (KKVQTDLSSPQ) the composition is skewed to polar residues.

It belongs to the universal ribosomal protein uS12 family. Part of the 30S ribosomal subunit. Contacts proteins S8 and S17. May interact with IF1 in the 30S initiation complex.

Functionally, with S4 and S5 plays an important role in translational accuracy. In terms of biological role, interacts with and stabilizes bases of the 16S rRNA that are involved in tRNA selection in the A site and with the mRNA backbone. Located at the interface of the 30S and 50S subunits, it traverses the body of the 30S subunit contacting proteins on the other side and probably holding the rRNA structure together. The combined cluster of proteins S8, S12 and S17 appears to hold together the shoulder and platform of the 30S subunit. In Halalkalibacterium halodurans (strain ATCC BAA-125 / DSM 18197 / FERM 7344 / JCM 9153 / C-125) (Bacillus halodurans), this protein is Small ribosomal subunit protein uS12.